The sequence spans 218 residues: ATP-dependent dethiobiotin synthetase BioD (218 aa).

An ATP-binding site is contributed by 10-15 (NAGKTT). A Mg(2+)-binding site is contributed by threonine 14. Lysine 35 is a catalytic residue. Residue threonine 39 coordinates substrate. Histidine 52 and glutamate 116 together coordinate Mg(2+). ATP contacts are provided by residues 116–119 (EGAG) and 176–177 (LR).

It belongs to the dethiobiotin synthetase family. In terms of assembly, homodimer. Mg(2+) serves as cofactor.

The protein localises to the cytoplasm. The catalysed reaction is (7R,8S)-7,8-diammoniononanoate + CO2 + ATP = (4R,5S)-dethiobiotin + ADP + phosphate + 3 H(+). It functions in the pathway cofactor biosynthesis; biotin biosynthesis; biotin from 7,8-diaminononanoate: step 1/2. Catalyzes a mechanistically unusual reaction, the ATP-dependent insertion of CO2 between the N7 and N8 nitrogen atoms of 7,8-diaminopelargonic acid (DAPA, also called 7,8-diammoniononanoate) to form a ureido ring. This chain is ATP-dependent dethiobiotin synthetase BioD, found in Helicobacter pylori (strain Shi470).